The primary structure comprises 530 residues: Glucose-6-phosphate isomerase (530 aa).

Glu335 (proton donor) is an active-site residue. Active-site residues include His366 and Lys495.

It belongs to the GPI family.

The protein resides in the cytoplasm. The enzyme catalyses alpha-D-glucose 6-phosphate = beta-D-fructose 6-phosphate. It functions in the pathway carbohydrate biosynthesis; gluconeogenesis. Its pathway is carbohydrate degradation; glycolysis; D-glyceraldehyde 3-phosphate and glycerone phosphate from D-glucose: step 2/4. Functionally, catalyzes the reversible isomerization of glucose-6-phosphate to fructose-6-phosphate. The chain is Glucose-6-phosphate isomerase from Roseobacter denitrificans (strain ATCC 33942 / OCh 114) (Erythrobacter sp. (strain OCh 114)).